The primary structure comprises 444 residues: D(2) dopamine receptor (444 aa).

At 1-37 the chain is on the extracellular side; sequence MDPLNLSWYDDDPESRNWSRPFNGSEGKADRPPYNYY. Asn5, Asn17, and Asn23 each carry an N-linked (GlcNAc...) asparagine glycan. Residues 38 to 60 traverse the membrane as a helical segment; sequence AMLLTLLIFVIVFGNVLVCMAVS. The Cytoplasmic portion of the chain corresponds to 61–70; the sequence is REKALQTTTN. A helical membrane pass occupies residues 71–93; that stretch reads YLIVSLAVADLLVATLVMPWVVY. The Extracellular portion of the chain corresponds to 94 to 108; the sequence is LEVVGEWKFSRIHCD. A disulfide bridge links Cys107 with Cys182. Residues 109-130 form a helical membrane-spanning segment; the sequence is IFVTLDVMMCTASILNLCAISI. Residues 131 to 151 are Cytoplasmic-facing; the sequence is DRYTAVAMPMLYNTRYSSKRR. The chain crosses the membrane as a helical span at residues 152–172; sequence VTVMIAIVWVLSFTISCPMLF. Residues 173-188 are Extracellular-facing; that stretch reads GLNNTDQNECIIANPA. A helical membrane pass occupies residues 189–213; it reads FVVYSSIVSFYVPFIVTLLVYIKIY. Positions 211 to 374 are interaction with PPP1R9B; that stretch reads KIYIVLRRRR…SQQKEKKATQ (164 aa). Over 214 to 374 the chain is Cytoplasmic; that stretch reads IVLRRRRKRV…SQQKEKKATQ (161 aa). Residues 281–332 form a disordered region; that stretch reads MEMLSSTSPPERTRYSPIPPSHHQLTLPDPSHHGLHSTPDSPAKPEKNGHAK. A helical transmembrane segment spans residues 375–396; it reads MLAIVLGVFIICWLPFFITHIL. Over 397–410 the chain is Extracellular; that stretch reads NIHCDCNIPPVLYS. An intrachain disulfide couples Cys400 to Cys402. The helical transmembrane segment at 411–432 threads the bilayer; it reads AFTWLGYVNSAVNPIIYTTFNI. Residues 433 to 444 lie on the Cytoplasmic side of the membrane; sequence EFRKAFLKILHC. Cys444 carries the S-palmitoyl cysteine lipid modification.

Belongs to the G-protein coupled receptor 1 family. Forms homo- and heterooligomers with DRD4. The interaction with DRD4 may modulate agonist-induced downstream signaling. Interacts with CADPS and CADPS2. Interacts with GPRASP1, PPP1R9B and CLIC6. Interacts with ARRB2. Interacts with HTR2A. Interacts with DRD1. Interacts with KCNA2. In terms of processing, palmitoylated. Palmitoylation which is required for proper localization to the plasma membrane and stability of the receptor could be carried on by ZDHHC4, ZDHHC3 and ZDHHC8.

It is found in the cell membrane. The protein localises to the golgi apparatus membrane. Functionally, dopamine receptor whose activity is mediated by G proteins which inhibit adenylyl cyclase. Positively regulates postnatal regression of retinal hyaloid vessels via suppression of VEGFR2/KDR activity, downstream of OPN5. The polypeptide is D(2) dopamine receptor (DRD2) (Bos taurus (Bovine)).